The chain runs to 643 residues: tRNA 5-methylaminomethyl-2-thiouridine biosynthesis bifunctional protein MnmC (643 aa).

Residues 1-223 (MPDRLVSATL…VDDRLVGDYA (223 aa)) form a tRNA (mnm(5)s(2)U34)-methyltransferase region. The interval 247 to 643 (IGAGLAGCAV…LRARRVGSAG (397 aa)) is FAD-dependent cmnm(5)s(2)U34 oxidoreductase.

The protein in the N-terminal section; belongs to the methyltransferase superfamily. tRNA (mnm(5)s(2)U34)-methyltransferase family. This sequence in the C-terminal section; belongs to the DAO family. FAD is required as a cofactor.

The protein localises to the cytoplasm. The enzyme catalyses 5-aminomethyl-2-thiouridine(34) in tRNA + S-adenosyl-L-methionine = 5-methylaminomethyl-2-thiouridine(34) in tRNA + S-adenosyl-L-homocysteine + H(+). In terms of biological role, catalyzes the last two steps in the biosynthesis of 5-methylaminomethyl-2-thiouridine (mnm(5)s(2)U) at the wobble position (U34) in tRNA. Catalyzes the FAD-dependent demodification of cmnm(5)s(2)U34 to nm(5)s(2)U34, followed by the transfer of a methyl group from S-adenosyl-L-methionine to nm(5)s(2)U34, to form mnm(5)s(2)U34. The polypeptide is tRNA 5-methylaminomethyl-2-thiouridine biosynthesis bifunctional protein MnmC (Burkholderia cenocepacia (strain HI2424)).